Consider the following 887-residue polypeptide: 3-hydroxy-3-methylglutaryl-coenzyme A reductase (887 aa).

The Cytoplasmic portion of the chain corresponds to 1-9; the sequence is MLSRLFRMH. A helical transmembrane segment spans residues 10–39; the sequence is GLFVASHPWEVIVGTVTLTICMMSMNMFTG. Over 40-56 the chain is Lumenal; it reads NNKICGWNYECPKFEED. The chain crosses the membrane as a helical span at residues 57–78; the sequence is VLSSDIIILTITRCIAILYIYF. The SSD domain occupies 61-218; the sequence is DIIILTITRC…MTFFPACVSL (158 aa). Residues 75 to 78 carry the INSIG-binding motif motif; it reads YIYF. Residues 79–89 are Cytoplasmic-facing; that stretch reads QFQNLRQLGSK. A Glycyl lysine isopeptide (Lys-Gly) (interchain with G-Cter in ubiquitin) cross-link involves residue lysine 89. Residues 90 to 114 traverse the membrane as a helical segment; sequence YILGIAGLFTIFSSFVFSTVVIHFL. Residues 115 to 123 lie on the Lumenal side of the membrane; sequence DKELTGLNE. The helical transmembrane segment at 124 to 149 threads the bilayer; it reads ALPFFLLLIDLSRASALAKFALSSNS. At 150 to 159 the chain is on the cytoplasmic side; it reads QDEVRENIAR. A helical membrane pass occupies residues 160–187; sequence GMAILGPTFTLDALVECLVIGVGTMSGV. Residues 188–191 lie on the Lumenal side of the membrane; the sequence is RQLE. The helical transmembrane segment at 192–220 threads the bilayer; the sequence is IMCCFGCMSVLANYFVFMTFFPACVSLVL. Residues 221–248 are Cytoplasmic-facing; the sequence is ELSRESREGRPIWQLSHFARVLEEEENK. A Glycyl lysine isopeptide (Lys-Gly) (interchain with G-Cter in ubiquitin) cross-link involves residue lysine 248. The helical transmembrane segment at 249-275 threads the bilayer; that stretch reads PNPVTQRVKMIMSLGLVLVHAHSRWIA. Topologically, residues 276–314 are lumenal; sequence DPSPQNSTTEHSKVSLGLDEDVSKRIEPSVSLWQFYLSK. Residue asparagine 281 is glycosylated (N-linked (GlcNAc...) asparagine). The helical transmembrane segment at 315-339 threads the bilayer; that stretch reads MISMDIEQVVTLSLAFLLAVKYIFF. Over 340-887 the chain is Cytoplasmic; it reads EQAETESTLS…LQGTCTKKSA (548 aa). Residues glutamate 558, lysine 690, and aspartate 766 each act as charge relay system in the active site. Histidine 865 (proton donor) is an active-site residue. At serine 871 the chain carries Phosphoserine; by AMPK.

Belongs to the HMG-CoA reductase family. As to quaternary structure, homotetramer. Homodimer. Interacts (via its SSD) with INSIG1; the interaction, accelerated by sterols, leads to the recruitment of HMGCR to AMFR/gp78 for its ubiquitination by the sterol-mediated ERAD pathway. Interacts with UBIAD1. Post-translationally, N-glycosylated. Glycosylated with high mannose chains including Man(6)(GlcNAc)(2), Man(7)(GlcNAc)(2) and Man(8)(GlcNAc)(2). Deglycosylated by NGLY1 on release from the endoplasmic reticulum (ER) in a sterol-mediated manner. In terms of processing, undergoes sterol-mediated ubiquitination and ER-associated degradation (ERAD). Accumulation of sterols in the endoplasmic reticulum (ER) membrane, triggers binding of the reductase to the ER membrane protein INSIG1 or INSIG2. The INSIG1 binding leads to the recruitment of the ubiquitin ligase, AMFR/gp78, RNF139 or RNF145, initiating ubiquitination of the reductase. The ubiquitinated reductase is then extracted from the ER membrane and delivered to cytosolic 26S proteosomes by a mechanism probably mediated by the ATPase Valosin-containing protein VCP/p97. The INSIG2-binding leads to the recruitment of the ubiquitin ligase RNF139, initiating ubiquitination of the reductase. Lys-248 is the main site of ubiquitination. Ubiquitination is enhanced by the presence of a geranylgeranylated protein. Phosphorylated. Phosphorylation at Ser-871 reduces the catalytic activity.

It localises to the endoplasmic reticulum membrane. Its subcellular location is the peroxisome membrane. It catalyses the reaction (R)-mevalonate + 2 NADP(+) + CoA = (3S)-3-hydroxy-3-methylglutaryl-CoA + 2 NADPH + 2 H(+). It functions in the pathway metabolic intermediate biosynthesis; (R)-mevalonate biosynthesis; (R)-mevalonate from acetyl-CoA: step 3/3. With respect to regulation, regulated by a negative feedback mechanism through sterols and non-sterol metabolites derived from mevalonate. Phosphorylation at Ser-871 down-regulates the catalytic activity. In terms of biological role, catalyzes the conversion of (3S)-hydroxy-3-methylglutaryl-CoA (HMG-CoA) to mevalonic acid, the rate-limiting step in the synthesis of cholesterol and other isoprenoids, thus plays a critical role in cellular cholesterol homeostasis. The chain is 3-hydroxy-3-methylglutaryl-coenzyme A reductase (HMGCR) from Cricetulus griseus (Chinese hamster).